The primary structure comprises 151 residues: Transcriptional repressor NrdR (151 aa).

Positions 1–24 (MRCPKCQHNGTRVLDSRPSDESRS) are disordered. A zinc finger lies at 3–34 (CPKCQHNGTRVLDSRPSDESRSIKRRRECEKC). The segment covering 14–24 (LDSRPSDESRS) has biased composition (basic and acidic residues). In terms of domain architecture, ATP-cone spans 49–139 (LLIIKKDGMR…VYRQFKDINV (91 aa)).

The protein belongs to the NrdR family. Requires Zn(2+) as cofactor.

Its function is as follows. Negatively regulates transcription of bacterial ribonucleotide reductase nrd genes and operons by binding to NrdR-boxes. The polypeptide is Transcriptional repressor NrdR (Shouchella clausii (strain KSM-K16) (Alkalihalobacillus clausii)).